The chain runs to 427 residues: CCA-adding enzyme (427 aa).

Residues S50 and K53 each contribute to the ATP site. Residues S50 and K53 each coordinate CTP. The Mg(2+) site is built by D61, D63, and D112. ATP contacts are provided by H135, K155, and Y164. Residues H135, K155, and Y164 each contribute to the CTP site.

Belongs to the tRNA nucleotidyltransferase/poly(A) polymerase family. Archaeal CCA-adding enzyme subfamily. In terms of assembly, homodimer. Mg(2+) is required as a cofactor.

The catalysed reaction is a tRNA precursor + 2 CTP + ATP = a tRNA with a 3' CCA end + 3 diphosphate. The enzyme catalyses a tRNA with a 3' CCA end + 2 CTP + ATP = a tRNA with a 3' CCACCA end + 3 diphosphate. Its function is as follows. Catalyzes the addition and repair of the essential 3'-terminal CCA sequence in tRNAs without using a nucleic acid template. Adds these three nucleotides in the order of C, C, and A to the tRNA nucleotide-73, using CTP and ATP as substrates and producing inorganic pyrophosphate. tRNA 3'-terminal CCA addition is required both for tRNA processing and repair. Also involved in tRNA surveillance by mediating tandem CCA addition to generate a CCACCA at the 3' terminus of unstable tRNAs. While stable tRNAs receive only 3'-terminal CCA, unstable tRNAs are marked with CCACCA and rapidly degraded. The protein is CCA-adding enzyme of Picrophilus torridus (strain ATCC 700027 / DSM 9790 / JCM 10055 / NBRC 100828 / KAW 2/3).